Here is a 482-residue protein sequence, read N- to C-terminus: PHD finger protein At3g20280 (482 aa).

Residues 45 to 97 (AMACQICEVTINEMDTLLICDACEKAYHLKCLQGNNMKGVPKSEWHCSRCVQA) form a PHD-type zinc finger. Disordered regions lie at residues 188 to 210 (TNIG…APVS) and 314 to 482 (SSNS…ENAA). Positions 314–324 (SSNSQQAVSHS) are enriched in low complexity. Composition is skewed to polar residues over residues 377-386 (ACQNHPTASP) and 393-428 (QDST…NYDS). The span at 447-482 (DSEKGKGLNGLDDRHQEQPSEPEFYKSDSVKEENAA) shows a compositional bias: basic and acidic residues.

This Arabidopsis thaliana (Mouse-ear cress) protein is PHD finger protein At3g20280.